Consider the following 180-residue polypeptide: MSKKKAEDKQPIIKDEAVEEPKSDSKVNALSAKIAELQQQLDDSQNDYLRAQAEIQNMQKRSQKEQSALAKYGAQRLAKEVVPVMDDLKRALQVQVDNDSGQQLKTGIEMVYKHLEKALNDNDIKEIDADGVAFDPELHQAVQTVPADDDHPADTVVQVLQSGYKLADRVLRPAMVVVAQ.

Residues 1 to 25 (MSKKKAEDKQPIIKDEAVEEPKSDS) form a disordered region.

It belongs to the GrpE family. In terms of assembly, homodimer.

Its subcellular location is the cytoplasm. Participates actively in the response to hyperosmotic and heat shock by preventing the aggregation of stress-denatured proteins, in association with DnaK and GrpE. It is the nucleotide exchange factor for DnaK and may function as a thermosensor. Unfolded proteins bind initially to DnaJ; upon interaction with the DnaJ-bound protein, DnaK hydrolyzes its bound ATP, resulting in the formation of a stable complex. GrpE releases ADP from DnaK; ATP binding to DnaK triggers the release of the substrate protein, thus completing the reaction cycle. Several rounds of ATP-dependent interactions between DnaJ, DnaK and GrpE are required for fully efficient folding. This is Protein GrpE from Fructilactobacillus sanfranciscensis (Lactobacillus sanfranciscensis).